The following is a 509-amino-acid chain: MNLLDPFMKMTDEQEKGLSGAPSPTMSEDSAGSPCPSGSGSDTENTRPQENTFPKGEPDLKKESEEDKFPVCIREAVSQVLKGYDWTLVPMPVRVNGSSKNKPHVKRPMNAFMVWAQAARRKLADQYPHLHNAELSKTLGKLWRLLNESEKRPFVEEAERLRVQHKKDHPDYKYQPRRRKSVKNGQAEAEEATEQTHISPNAIFKALQADSPHSSSGMSEVHSPGEHSGQSQGPPTPPTTPKTDVQPGKADLKREGRPLPEGGRQPPIDFRDVDIGELSSDVISNIETFDVNEFDQYLPPNGHPGVPATHGQVTYTGSYGISSTAATPAGAGHVWMSKQQAPPPPPQQPPQAPPAPQAPPQPQAAPPQQPAAPPQQPQAHTLTTLSSEPGQSQRTHIKTEQLSPSHYSEQQQHSPQQIAYSPFNLPHYSPSYPPITRSQYDYTDHQNSSSYYSHAAGQGTGLYSTFTYMNPAQRPMYTPIADTSGVPSIPQTHSPQHWEQPVYTQLTRP.

Disordered stretches follow at residues 1 to 67 and 160 to 273; these read MNLL…SEED and RLRV…FRDV. A compositionally biased stretch (low complexity) spans 30 to 41; that stretch reads SAGSPCPSGSGS. The segment covering 42–52 has biased composition (polar residues); the sequence is DTENTRPQENT. Composition is skewed to basic and acidic residues over residues 56–67 and 160–174; these read GEPDLKKESEED and RLRV…DYKY. A dimerization (DIM) region spans residues 63-103; sequence ESEEDKFPVCIREAVSQVLKGYDWTLVPMPVRVNGSSKNKP. The interval 63–103 is PQA; it reads ESEEDKFPVCIREAVSQVLKGYDWTLVPMPVRVNGSSKNKP. Residue S64 is modified to Phosphoserine. Residues 105 to 173 constitute a DNA-binding region (HMG box); it reads VKRPMNAFMV…QHKKDHPDYK (69 aa). Phosphoserine is present on S211. Positions 224–307 are transactivation domain (TAM); it reads PGEHSGQSQG…LPPNGHPGVP (84 aa). Short sequence motifs (9aaTAD) lie at residues 275–284 and 290–298; these read IGELSSDVIS and DVNEFDQYL. Residues 334–415 form a disordered region; it reads VWMSKQQAPP…HYSEQQQHSP (82 aa). The segment covering 341-376 has biased composition (pro residues); the sequence is APPPPPQQPPQAPPAPQAPPQPQAAPPQQPAAPPQQ. Residues 380-415 are compositionally biased toward polar residues; the sequence is HTLTTLSSEPGQSQRTHIKTEQLSPSHYSEQQQHSP. Residues 394–509 are transactivation domain (TAC); that stretch reads RTHIKTEQLS…QPVYTQLTRP (116 aa). K398 participates in a covalent cross-link: Glycyl lysine isopeptide (Lys-Gly) (interchain with G-Cter in ubiquitin). The short motif at 460–468 is the 9aaTAD 3 element; that stretch reads TGLYSTFTY. The interval 479–509 is disordered; it reads PIADTSGVPSIPQTHSPQHWEQPVYTQLTRP. Over residues 485–509 the composition is skewed to polar residues; that stretch reads GVPSIPQTHSPQHWEQPVYTQLTRP.

As to quaternary structure, homodimer; homodimerization is required for activity. Interacts (via C-terminus) with ZNF219; forming a complex that binds to the COL2A1 promoter and activates COL2A1 expression. Interacts with DDRGK1. Interacts with EP300/p300. Interacts with beta-catenin (CTNNB1); inhibiting CTNNB1 activity by competing with the binding sites of TCF/LEF within CTNNB1. In terms of processing, acetylated; acetylation impairs nuclear localization and ability to transactivate expression of target genes. Deacetylated by SIRT1. Post-translationally, phosphorylation at Ser-64 and Ser-211 by PKA increases transcriptional activity and may help delay chondrocyte maturation downstream of PTHLH/PTHrP signaling. Phosphorylation at either Ser-64 or Ser-211 is required for sumoylation, but phosphorylation is not dependent on sumoylation. Phosphorylated on tyrosine residues; tyrosine dephosphorylation by PTPN11/SHP2 blocks SOX9 phosphorylation by PKA and subsequent SUMOylation. Sumoylated; phosphorylation at either Ser-64 or Ser-211 is required for sumoylation. Sumoylation is induced by BMP signaling pathway. In terms of processing, ubiquitinated; ubiquitination leads to proteasomal degradation and is negatively regulated by DDRGK1.

It localises to the nucleus. In terms of biological role, transcription factor that plays a key role in chondrocytes differentiation and skeletal development. Specifically binds the 5'-ACAAAG-3' DNA motif present in enhancers and super-enhancers and promotes expression of genes important for chondrogenesis, including cartilage matrix protein-coding genes COL2A1, COL4A2, COL9A1, COL11A2 and ACAN, SOX5 and SOX6. Also binds to some promoter regions. Plays a central role in successive steps of chondrocyte differentiation. Absolutely required for precartilaginous condensation, the first step in chondrogenesis during which skeletal progenitors differentiate into prechondrocytes. Together with SOX5 and SOX6, required for overt chondrogenesis when condensed prechondrocytes differentiate into early stage chondrocytes, the second step in chondrogenesis. Later, required to direct hypertrophic maturation and block osteoblast differentiation of growth plate chondrocytes: maintains chondrocyte columnar proliferation, delays prehypertrophy and then prevents osteoblastic differentiation of chondrocytes by lowering beta-catenin (CTNNB1) signaling and RUNX2 expression. Also required for chondrocyte hypertrophy, both indirectly, by keeping the lineage fate of chondrocytes, and directly, by remaining present in upper hypertrophic cells and transactivating COL10A1 along with MEF2C. Low lipid levels are the main nutritional determinant for chondrogenic commitment of skeletal progenitor cells: when lipids levels are low, FOXO (FOXO1 and FOXO3) transcription factors promote expression of SOX9, which induces chondrogenic commitment and suppresses fatty acid oxidation. Mechanistically, helps, but is not required, to remove epigenetic signatures of transcriptional repression and deposit active promoter and enhancer marks at chondrocyte-specific genes. Acts in cooperation with the Hedgehog pathway-dependent GLI (GLI1 and GLI3) transcription factors. In addition to cartilage development, also acts as a regulator of proliferation and differentiation in epithelial stem/progenitor cells: involved in the lung epithelium during branching morphogenesis, by balancing proliferation and differentiation and regulating the extracellular matrix. Controls epithelial branching during kidney development. The polypeptide is Transcription factor SOX-9 (SOX9) (Callithrix jacchus (White-tufted-ear marmoset)).